Reading from the N-terminus, the 361-residue chain is Phosphoserine aminotransferase (361 aa).

L-glutamate is bound at residue Arg-42. Pyridoxal 5'-phosphate is bound by residues 76–77 (AR), Trp-102, Thr-153, Asp-173, and Gln-196. Lys-197 carries the N6-(pyridoxal phosphate)lysine modification. 238 to 239 (NT) contacts pyridoxal 5'-phosphate.

It belongs to the class-V pyridoxal-phosphate-dependent aminotransferase family. SerC subfamily. Homodimer. Pyridoxal 5'-phosphate is required as a cofactor.

Its subcellular location is the cytoplasm. The catalysed reaction is O-phospho-L-serine + 2-oxoglutarate = 3-phosphooxypyruvate + L-glutamate. It catalyses the reaction 4-(phosphooxy)-L-threonine + 2-oxoglutarate = (R)-3-hydroxy-2-oxo-4-phosphooxybutanoate + L-glutamate. The protein operates within amino-acid biosynthesis; L-serine biosynthesis; L-serine from 3-phospho-D-glycerate: step 2/3. It functions in the pathway cofactor biosynthesis; pyridoxine 5'-phosphate biosynthesis; pyridoxine 5'-phosphate from D-erythrose 4-phosphate: step 3/5. Catalyzes the reversible conversion of 3-phosphohydroxypyruvate to phosphoserine and of 3-hydroxy-2-oxo-4-phosphonooxybutanoate to phosphohydroxythreonine. This chain is Phosphoserine aminotransferase, found in Yersinia pestis (strain Pestoides F).